A 547-amino-acid polypeptide reads, in one-letter code: CTP synthase (547 aa).

Residues 1-265 form an amidoligase domain region; sequence MTRYVFITGG…DEIVLRKLHI (265 aa). Residue S13 coordinates CTP. UTP is bound at residue S13. ATP contacts are provided by residues 14 to 19 and D71; that span reads SLGKGI. 2 residues coordinate Mg(2+): D71 and E139. Residues 146–148, 186–191, and K222 each bind CTP; these read DIE and KTKPTQ. UTP-binding positions include 186–191 and K222; that span reads KTKPTQ. The 252-residue stretch at 290 to 541 folds into the Glutamine amidotransferase type-1 domain; it reads TVGMVGKYVD…IRAARAQHEK (252 aa). G351 contacts L-glutamine. Residue C378 is the Nucleophile; for glutamine hydrolysis of the active site. Residues 379-382, E402, and R469 each bind L-glutamine; that span reads LGMQ. Catalysis depends on residues H514 and E516.

Belongs to the CTP synthase family. Homotetramer.

The enzyme catalyses UTP + L-glutamine + ATP + H2O = CTP + L-glutamate + ADP + phosphate + 2 H(+). It carries out the reaction L-glutamine + H2O = L-glutamate + NH4(+). The catalysed reaction is UTP + NH4(+) + ATP = CTP + ADP + phosphate + 2 H(+). It functions in the pathway pyrimidine metabolism; CTP biosynthesis via de novo pathway; CTP from UDP: step 2/2. Its activity is regulated as follows. Allosterically activated by GTP, when glutamine is the substrate; GTP has no effect on the reaction when ammonia is the substrate. The allosteric effector GTP functions by stabilizing the protein conformation that binds the tetrahedral intermediate(s) formed during glutamine hydrolysis. Inhibited by the product CTP, via allosteric rather than competitive inhibition. Functionally, catalyzes the ATP-dependent amination of UTP to CTP with either L-glutamine or ammonia as the source of nitrogen. Regulates intracellular CTP levels through interactions with the four ribonucleotide triphosphates. The sequence is that of CTP synthase from Thioalkalivibrio sulfidiphilus (strain HL-EbGR7).